The chain runs to 104 residues: L-rhamnose mutarotase (104 aa).

Tyr18 provides a ligand contact to substrate. His22 (proton donor) is an active-site residue. Substrate-binding positions include Tyr41 and 76-77; that span reads WW.

This sequence belongs to the rhamnose mutarotase family. In terms of assembly, homodimer.

Its subcellular location is the cytoplasm. The enzyme catalyses alpha-L-rhamnose = beta-L-rhamnose. The protein operates within carbohydrate metabolism; L-rhamnose metabolism. Involved in the anomeric conversion of L-rhamnose. The chain is L-rhamnose mutarotase from Phocaeicola vulgatus (strain ATCC 8482 / DSM 1447 / JCM 5826 / CCUG 4940 / NBRC 14291 / NCTC 11154) (Bacteroides vulgatus).